The sequence spans 456 residues: MESQSQRGQHETPKRSRFTGMFHKLKTNLVFRSKLAEINGAMGDLGTYIPIVLALTLAKDLDLGTTLIFTGIYNAITGAVYGVPMPVQPMKSIAAVAISSTAEDFGIPEIMAAGICTGGILFVLGISGLMQLVFNIIPLSVVRGIQLSQGLAFAMSAVKYIRKEQNFSKSKSVGDRPWLGLDGLVLALVCVLFIVLVNGDGEEEEEEEEGDGSRGRGRWGSVRKVIANVPSALLIFLLGVVLAFIRKPSIVHDIKFGPSKMKIVRISRKAWRNGFLKGTVPQLPLSVLNSVVAVCKLSYDLFPEKEFSAASVSMTVGLMNMVGCWFGAMPTCHGAGGLAGQYKFGGRSGGCVALLGVAKLVLGLVLGGSLVGILEKFPVGVLGALLLFAGVELAMAARDMNTKGDAFVMLMCTSVSLGSNAAIGFVAGDLLYVVLWMRNYGRAKPSSLPPQSGEHA.

A run of 9 helical transmembrane segments spans residues 67–87 (LIFTGIYNAITGAVYGVPMPV), 110–130 (IMAAGICTGGILFVLGISGLM), 133–153 (VFNIIPLSVVRGIQLSQGLAF), 177–197 (PWLGLDGLVLALVCVLFIVLV), 225–245 (VIANVPSALLIFLLGVVLAFI), 309–329 (AASVSMTVGLMNMVGCWFGAM), 354–374 (LLGVAKLVLGLVLGGSLVGIL), 377–397 (FPVGVLGALLLFAGVELAMAA), and 417–437 (LGSNAAIGFVAGDLLYVVLWM).

This sequence belongs to the SLC26A/SulP transporter (TC 2.A.53) family. Strongly expressed in roots. Detected in the vascular tissues of hypocotyls, in petioles and vascular tissues of cotyledons and leaves, in mesophyll cells, stamen, sepals and siliques.

It is found in the cell membrane. The protein resides in the endomembrane system. Its subcellular location is the mitochondrion membrane. With respect to regulation, not inhibited by sulfate. Functionally, high affinity molybdate transporter. Unable to transport sulfate. This is Molybdate transporter 1 (MOT1) from Arabidopsis thaliana (Mouse-ear cress).